The chain runs to 637 residues: 1-deoxy-D-xylulose-5-phosphate synthase (637 aa).

Residues H76 and 117–119 (GHS) each bind thiamine diphosphate. Position 148 (D148) interacts with Mg(2+). Thiamine diphosphate is bound by residues 149 to 150 (GA), N177, Y294, and E381. N177 contributes to the Mg(2+) binding site.

This sequence belongs to the transketolase family. DXPS subfamily. In terms of assembly, homodimer. Mg(2+) serves as cofactor. Thiamine diphosphate is required as a cofactor.

It carries out the reaction D-glyceraldehyde 3-phosphate + pyruvate + H(+) = 1-deoxy-D-xylulose 5-phosphate + CO2. Its pathway is metabolic intermediate biosynthesis; 1-deoxy-D-xylulose 5-phosphate biosynthesis; 1-deoxy-D-xylulose 5-phosphate from D-glyceraldehyde 3-phosphate and pyruvate: step 1/1. Functionally, catalyzes the acyloin condensation reaction between C atoms 2 and 3 of pyruvate and glyceraldehyde 3-phosphate to yield 1-deoxy-D-xylulose-5-phosphate (DXP). This is 1-deoxy-D-xylulose-5-phosphate synthase from Neisseria gonorrhoeae (strain ATCC 700825 / FA 1090).